We begin with the raw amino-acid sequence, 602 residues long: UvrABC system protein C (602 aa).

The GIY-YIG domain maps to 15–92 (DLPGSYQMKD…IQKYQPYYNI (78 aa)). The region spanning 197 to 232 (GKAKASLTAKMERAAKNLQFERAAEIRDQLHYIEQT) is the UVR domain.

Belongs to the UvrC family. As to quaternary structure, interacts with UvrB in an incision complex.

The protein resides in the cytoplasm. Its function is as follows. The UvrABC repair system catalyzes the recognition and processing of DNA lesions. UvrC both incises the 5' and 3' sides of the lesion. The N-terminal half is responsible for the 3' incision and the C-terminal half is responsible for the 5' incision. This chain is UvrABC system protein C, found in Lacticaseibacillus casei (strain BL23) (Lactobacillus casei).